The sequence spans 582 residues: MKRSMYAGHVREEHIGRTIVLKGWVSRRRDLGGLIFIDLRDREGVMQLVINPEDVSGDVMATAERLRSEYVIEVEGSVEARQQANDKLATGAVELKVSGLTILNTAKTTPFEIKDGVEVSDDMRLRYRYLDLRRPEMLESFKLRAKTTHVIRNYLDNLGFIDVETPMLTKSTPEGARDYLVPSRISQGHFYALPQSPQITKQLLMNAGFDRYYQIVKCFRDEDLRGDRQPEFTQVDLETSFLSEQEIQDIVEGMIAKVMKDTKGIEVKLPFPRMAYDDAMNHYGSDKPDTRFDMLLQDLTDLVKEVDFKVFSEAQAVKAIVVKGHADDYSRKDIDKLTEFAKQFGAKGLAWLKVVDGAFTGPIAKFLTGVESKLTESLQLEHNDLVLFVADTLEVANNTLGTLRTRIAKELDMIDMSQFHFLWVVDWPMFEWSEEEERYMSAHHPFTLPTQESAHELEGDLAKVRAVAYDIVLNGYELGGGSLRINQKDMQERMFKALGFTKEEASDQFGFLLEAMEYGFPPHGGLAIGLDRLVMLLAGKDNIREVIAFPKNNKASDPMTQAPSLVSEKQLEELQLQIEHHD.

E174 lines the L-aspartate pocket. Positions 198–201 are aspartate; the sequence is QITK. R220 contacts L-aspartate. ATP-binding positions include 220 to 222 and Q229; that span reads RDE. Residue H443 participates in L-aspartate binding. An ATP-binding site is contributed by E477. R484 contributes to the L-aspartate binding site. 529–532 is a binding site for ATP; it reads GLDR.

The protein belongs to the class-II aminoacyl-tRNA synthetase family. Type 1 subfamily. Homodimer.

The protein localises to the cytoplasm. It carries out the reaction tRNA(Asp) + L-aspartate + ATP = L-aspartyl-tRNA(Asp) + AMP + diphosphate. Functionally, catalyzes the attachment of L-aspartate to tRNA(Asp) in a two-step reaction: L-aspartate is first activated by ATP to form Asp-AMP and then transferred to the acceptor end of tRNA(Asp). This Streptococcus equi subsp. zooepidemicus (strain MGCS10565) protein is Aspartate--tRNA ligase.